Consider the following 250-residue polypeptide: Triosephosphate isomerase (250 aa).

10-12 is a substrate binding site; that stretch reads NWK. The Electrophile role is filled by histidine 96. The active-site Proton acceptor is glutamate 168. Residues glycine 174, serine 214, and 235-236 each bind substrate; that span reads GG.

Belongs to the triosephosphate isomerase family. In terms of assembly, homodimer.

Its subcellular location is the cytoplasm. The catalysed reaction is D-glyceraldehyde 3-phosphate = dihydroxyacetone phosphate. It participates in carbohydrate biosynthesis; gluconeogenesis. Its pathway is carbohydrate degradation; glycolysis; D-glyceraldehyde 3-phosphate from glycerone phosphate: step 1/1. In terms of biological role, involved in the gluconeogenesis. Catalyzes stereospecifically the conversion of dihydroxyacetone phosphate (DHAP) to D-glyceraldehyde-3-phosphate (G3P). This Streptococcus suis (strain 98HAH33) protein is Triosephosphate isomerase.